The sequence spans 1012 residues: DNA polymerase gamma (1012 aa).

This sequence belongs to the DNA polymerase type-A family. Requires Mg(2+) as cofactor.

It localises to the mitochondrion. It carries out the reaction DNA(n) + a 2'-deoxyribonucleoside 5'-triphosphate = DNA(n+1) + diphosphate. In terms of biological role, involved in the replication of mitochondrial DNA. In Komagataella pastoris (Yeast), this protein is DNA polymerase gamma (MIP1).